A 188-amino-acid polypeptide reads, in one-letter code: Ribosome maturation factor RimP (188 aa).

This sequence belongs to the RimP family.

The protein resides in the cytoplasm. Required for maturation of 30S ribosomal subunits. The sequence is that of Ribosome maturation factor RimP from Erythrobacter litoralis (strain HTCC2594).